The sequence spans 504 residues: Histidine ammonia-lyase (504 aa).

A cross-link (5-imidazolinone (Ala-Gly)) is located at residues 142-144 (ASG). At Ser143 the chain carries 2,3-didehydroalanine (Ser).

The protein belongs to the PAL/histidase family. Contains an active site 4-methylidene-imidazol-5-one (MIO), which is formed autocatalytically by cyclization and dehydration of residues Ala-Ser-Gly.

It is found in the cytoplasm. The enzyme catalyses L-histidine = trans-urocanate + NH4(+). Its pathway is amino-acid degradation; L-histidine degradation into L-glutamate; N-formimidoyl-L-glutamate from L-histidine: step 1/3. This Staphylococcus aureus (strain MRSA252) protein is Histidine ammonia-lyase.